The sequence spans 291 residues: Homeobox protein knotted-1-like 7 (291 aa).

In terms of domain architecture, ELK spans 194–214 (ELKLELKQGFKSRIEDVREEI). A DNA-binding region (homeobox; TALE-type) is located at residues 215 to 278 (MRKRRAGKLP…NQRKRNWHNN (64 aa)).

This sequence belongs to the TALE/KNOX homeobox family. In terms of assembly, may form heterodimeric complex with the TALE/BELL proteins. Interacts with OFP1, OFP2, OFP3, OFP4 and OFP6.

The protein localises to the nucleus. In terms of biological role, may be involved in secondary cell wall biosynthesis. This is Homeobox protein knotted-1-like 7 (KNAT7) from Arabidopsis thaliana (Mouse-ear cress).